The primary structure comprises 955 residues: MDRGLSTGTHNDNEGLRERPVASQSASTLSPEALTATGDVEPKDTGKELKTYGRTPDGTVFTVPQTHDMVSQLLSPSEPKNLSDIIVLAILGAHILLIWALPKGAKVPVSAVLYLFWRAGYNAGIGWLLHNQSHHKTLVRWAEKTKIFVNPATGQNPHPHLYNLIKRELETKIPHDYSFEKAPLEYNTWLVFRRLVDLILMCDFTSYCLFAIACSHHPVNESLLMTVLRWFSGIVLVLFNLWVKLDAHRVVKDYAWYWGDFFYLIDQELTFDGVFEMAPHPMYSVGYAGYYGISLMAASYKVLFISIIAHAAQFAFLVFVENPHIDKTYNPPPPRKRTIDQDTASTTTHTTDSPIAPAPVDENVPHAPTFSSRPPPSVHNLLGFHNLDLYRITDTSSMLVQFLVFAVTVLTPSTPWYQFLFVANAAVWRLWYSVGIGYLLNRQSNCKAWTRHFVKYGETPHEAWNQWKGTYHLSMIMCYASFIAAVWKMYTLPSDWGYGLVLLRHVLGAGLICLQIWTSVSIYESLGEFGWFYGDFFYDESPKLTYNGIYRFLNNPERVLGLAGVWGAVLITSSGAITFLALLSHILSLAFIQFIERPHMQKLYGQSIRRDAGLVKNLKRSLPPPLKQLHGSMDKIVDGSFEFIEDFLENARPKLAAGVDTFVKDTTALFQKYPARVTITRIDEDVAGYDSRDYSLEVEGTDSSALAECDQSSGREGANARMPLDRRGDLKNLVFEYGAPIKVKWTAPLNHSKKDWIGLYRVTDNTSREITKVSSQGRWIAVNEGSYDNLTCEKGIVSSDVVIPAPHGDNREMASGEVIFSSDKLFWTQGVFEFRYHHNGKHNVMAISRPFEIRIRRFEEEGHHEMMQTSVENSLLPVVRNCFDRDPEVAPETVDEQFGSLVERDGKYAKRVVFAVHQMFGIEFAPEVVRADGTVRNLAWRICNAKKVLAPYNRS.

Over residues 1-10 (MDRGLSTGTH) the composition is skewed to polar residues. The tract at residues 1–61 (MDRGLSTGTH…YGRTPDGTVF (61 aa)) is disordered. Topologically, residues 1–81 (MDRGLSTGTH…QLLSPSEPKN (81 aa)) are lumenal. 2 stretches are compositionally biased toward basic and acidic residues: residues 11–20 (NDNEGLRERP) and 40–51 (VEPKDTGKELKT). A helical transmembrane segment spans residues 82–102 (LSDIIVLAILGAHILLIWALP). At 103–108 (KGAKVP) the chain is on the cytoplasmic side. A helical transmembrane segment spans residues 109-129 (VSAVLYLFWRAGYNAGIGWLL). At 130–194 (HNQSHHKTLV…EYNTWLVFRR (65 aa)) the chain is on the lumenal side. A helical transmembrane segment spans residues 195–215 (LVDLILMCDFTSYCLFAIACS). Residues 216-222 (HHPVNES) lie on the Cytoplasmic side of the membrane. The chain crosses the membrane as a helical span at residues 223–243 (LLMTVLRWFSGIVLVLFNLWV). Residues 244–276 (KLDAHRVVKDYAWYWGDFFYLIDQELTFDGVFE) lie on the Lumenal side of the membrane. Residues 277–297 (MAPHPMYSVGYAGYYGISLMA) traverse the membrane as a helical segment. The Cytoplasmic portion of the chain corresponds to 298–299 (AS). The chain crosses the membrane as a helical span at residues 300–320 (YKVLFISIIAHAAQFAFLVFV). At 321 to 388 (ENPHIDKTYN…HNLLGFHNLD (68 aa)) the chain is on the lumenal side. The tract at residues 328-358 (TYNPPPPRKRTIDQDTASTTTHTTDSPIAPA) is disordered. Residues 341 to 352 (QDTASTTTHTTD) show a composition bias toward low complexity. A helical membrane pass occupies residues 389–410 (LYRITDTSSMLVQFLVFAVTVL). Over 411-418 (TPSTPWYQ) the chain is Cytoplasmic. Residues 419-441 (FLFVANAAVWRLWYSVGIGYLLN) form a helical membrane-spanning segment. Residues 442 to 472 (RQSNCKAWTRHFVKYGETPHEAWNQWKGTYH) lie on the Lumenal side of the membrane. A helical membrane pass occupies residues 473–493 (LSMIMCYASFIAAVWKMYTLP). Over 494-495 (SD) the chain is Cytoplasmic. Residues 496–516 (WGYGLVLLRHVLGAGLICLQI) traverse the membrane as a helical segment. Residues 517-574 (WTSVSIYESLGEFGWFYGDFFYDESPKLTYNGIYRFLNNPERVLGLAGVWGAVLITSS) lie on the Lumenal side of the membrane. The helical transmembrane segment at 575 to 595 (GAITFLALLSHILSLAFIQFI) threads the bilayer. Over 596-955 (ERPHMQKLYG…KKVLAPYNRS (360 aa)) the chain is Cytoplasmic.

Belongs to the class VI-like SAM-binding methyltransferase superfamily. CHO2 family.

The protein resides in the endoplasmic reticulum membrane. The enzyme catalyses a 1,2-diacyl-sn-glycero-3-phosphoethanolamine + S-adenosyl-L-methionine = a 1,2-diacyl-sn-glycero-3-phospho-N-methylethanolamine + S-adenosyl-L-homocysteine + H(+). It functions in the pathway phospholipid metabolism; phosphatidylcholine biosynthesis. Its function is as follows. Catalyzes the first step of the methylation pathway of phosphatidylcholine biosynthesis, the SAM-dependent methylation of phosphatidylethanolamine (PE) to phosphatidylmonomethylethanolamine (PMME). This chain is Phosphatidylethanolamine N-methyltransferase (cho2), found in Aspergillus terreus (strain NIH 2624 / FGSC A1156).